A 264-amino-acid polypeptide reads, in one-letter code: Glutamate racemase (264 aa).

Residues Asp10–Ser11 and Tyr42–Gly43 each bind substrate. The Proton donor/acceptor role is filled by Cys73. Asn74–Thr75 contacts substrate. The active-site Proton donor/acceptor is Cys183. A substrate-binding site is contributed by Thr184–His185.

It belongs to the aspartate/glutamate racemases family.

The catalysed reaction is L-glutamate = D-glutamate. It functions in the pathway cell wall biogenesis; peptidoglycan biosynthesis. Functionally, provides the (R)-glutamate required for cell wall biosynthesis. The chain is Glutamate racemase from Streptococcus suis (strain 98HAH33).